The chain runs to 316 residues: Lipoyl synthase (316 aa).

7 residues coordinate [4Fe-4S] cluster: Cys-66, Cys-71, Cys-77, Cys-92, Cys-96, Cys-99, and Ser-306. In terms of domain architecture, Radical SAM core spans 78–295; sequence FNRGTATFMI…NLIAFDLGFK (218 aa).

The protein belongs to the radical SAM superfamily. Lipoyl synthase family. It depends on [4Fe-4S] cluster as a cofactor.

The protein resides in the cytoplasm. The catalysed reaction is [[Fe-S] cluster scaffold protein carrying a second [4Fe-4S](2+) cluster] + N(6)-octanoyl-L-lysyl-[protein] + 2 oxidized [2Fe-2S]-[ferredoxin] + 2 S-adenosyl-L-methionine + 4 H(+) = [[Fe-S] cluster scaffold protein] + N(6)-[(R)-dihydrolipoyl]-L-lysyl-[protein] + 4 Fe(3+) + 2 hydrogen sulfide + 2 5'-deoxyadenosine + 2 L-methionine + 2 reduced [2Fe-2S]-[ferredoxin]. It functions in the pathway protein modification; protein lipoylation via endogenous pathway; protein N(6)-(lipoyl)lysine from octanoyl-[acyl-carrier-protein]: step 2/2. Its function is as follows. Catalyzes the radical-mediated insertion of two sulfur atoms into the C-6 and C-8 positions of the octanoyl moiety bound to the lipoyl domains of lipoate-dependent enzymes, thereby converting the octanoylated domains into lipoylated derivatives. This Wigglesworthia glossinidia brevipalpis protein is Lipoyl synthase.